A 426-amino-acid chain; its full sequence is Histidine--tRNA ligase (426 aa).

The protein belongs to the class-II aminoacyl-tRNA synthetase family. As to quaternary structure, homodimer.

The protein resides in the cytoplasm. The catalysed reaction is tRNA(His) + L-histidine + ATP = L-histidyl-tRNA(His) + AMP + diphosphate + H(+). In Streptococcus pyogenes serotype M1, this protein is Histidine--tRNA ligase.